A 247-amino-acid polypeptide reads, in one-letter code: 7-cyano-7-deazaguanine synthase (247 aa).

21-31 (FSGGQDSTACL) is a binding site for ATP. Residues Cys-209, Cys-224, Cys-227, and Cys-230 each contribute to the Zn(2+) site.

This sequence belongs to the QueC family. It depends on Zn(2+) as a cofactor.

The catalysed reaction is 7-carboxy-7-deazaguanine + NH4(+) + ATP = 7-cyano-7-deazaguanine + ADP + phosphate + H2O + H(+). It participates in purine metabolism; 7-cyano-7-deazaguanine biosynthesis. In terms of biological role, catalyzes the ATP-dependent conversion of 7-carboxy-7-deazaguanine (CDG) to 7-cyano-7-deazaguanine (preQ(0)). This Halorhodospira halophila (strain DSM 244 / SL1) (Ectothiorhodospira halophila (strain DSM 244 / SL1)) protein is 7-cyano-7-deazaguanine synthase.